The following is a 183-amino-acid chain: Small ribosomal subunit protein uS4c (183 aa).

The region spanning 82 to 143 (MRLDNILFRL…KQRSKALIQN (62 aa)) is the S4 RNA-binding domain.

The protein belongs to the universal ribosomal protein uS4 family. As to quaternary structure, part of the 30S ribosomal subunit. Contacts protein S5. The interaction surface between S4 and S5 is involved in control of translational fidelity.

It is found in the plastid. Its subcellular location is the chloroplast. One of the primary rRNA binding proteins, it binds directly to 16S rRNA where it nucleates assembly of the body of the 30S subunit. Its function is as follows. With S5 and S12 plays an important role in translational accuracy. The sequence is that of Small ribosomal subunit protein uS4c (rps4) from Freesia sp. (strain Lejeune 1997).